We begin with the raw amino-acid sequence, 192 residues long: Fe/S biogenesis protein NfuA (192 aa).

2 residues coordinate [4Fe-4S] cluster: cysteine 149 and cysteine 152.

It belongs to the NfuA family. As to quaternary structure, homodimer. The cofactor is [4Fe-4S] cluster.

Its function is as follows. Involved in iron-sulfur cluster biogenesis. Binds a 4Fe-4S cluster, can transfer this cluster to apoproteins, and thereby intervenes in the maturation of Fe/S proteins. Could also act as a scaffold/chaperone for damaged Fe/S proteins. The polypeptide is Fe/S biogenesis protein NfuA (Shewanella putrefaciens (strain CN-32 / ATCC BAA-453)).